Reading from the N-terminus, the 276-residue chain is Sulfur carrier protein FdhD (276 aa).

Cys120 acts as the Cysteine persulfide intermediate in catalysis.

It belongs to the FdhD family.

Its subcellular location is the cytoplasm. Functionally, required for formate dehydrogenase (FDH) activity. Acts as a sulfur carrier protein that transfers sulfur from IscS to the molybdenum cofactor prior to its insertion into FDH. This Bordetella bronchiseptica (strain ATCC BAA-588 / NCTC 13252 / RB50) (Alcaligenes bronchisepticus) protein is Sulfur carrier protein FdhD.